Consider the following 250-residue polypeptide: UPF0259 membrane protein Spro_2675 (250 aa).

The next 6 membrane-spanning stretches (helical) occupy residues 23-43, 87-107, 132-152, 156-176, 192-212, and 222-242; these read ILML…AFSP, AATF…LTLI, LLLL…LFVV, IMAI…KGVF, VIVP…FMVS, and ASVV…IYLF.

It belongs to the UPF0259 family.

The protein resides in the cell inner membrane. This Serratia proteamaculans (strain 568) protein is UPF0259 membrane protein Spro_2675.